The sequence spans 158 residues: UPF0098 protein YbhB (158 aa).

The protein belongs to the UPF0098 family. As to quaternary structure, homodimer.

It is found in the cytoplasm. This Escherichia coli (strain K12) protein is UPF0098 protein YbhB (ybhB).